We begin with the raw amino-acid sequence, 123 residues long: Undecaprenol kinase (123 aa).

Topologically, residues 1–33 are cytoplasmic; that stretch reads MDSKDHRNELNRFFKSFVHAGRGIWETARTERN. The helical transmembrane segment at 34–51 threads the bilayer; the sequence is FQFHAAAACAVLICGFLV. Residues 52-57 lie on the Extracellular side of the membrane; it reads ELSIIE. The chain crosses the membrane as a helical span at residues 58-74; that stretch reads WMIIFLLIGGMFSLELL. Residues 75–99 lie on the Cytoplasmic side of the membrane; it reads NTAIEHTVDLITDKHHPLAKAAKDA. Residues 100 to 120 form a helical membrane-spanning segment; it reads AAGAVCVFAVISCIIGLLIFL. The Extracellular portion of the chain corresponds to 121-123; the sequence is PKL.

Belongs to the bacterial diacylglycerol kinase family.

The protein localises to the cell membrane. It catalyses the reaction di-trans,octa-cis-undecaprenol + ATP = di-trans,octa-cis-undecaprenyl phosphate + ADP + H(+). Functionally, catalyzes the phosphorylation of undecaprenol in vitro, which is probably the physiological substrate. Exhibits no detectable activity against other substrates such as monoacylglycerol, ceramide, or diacylglycerol (DAG). Appears indispensable for the maintenance of spore stability and viability in B.subtilis. The sequence is that of Undecaprenol kinase (dgkA) from Bacillus subtilis (strain 168).